The chain runs to 242 residues: MRVDNTASHQNVDEQEIAKFEAVASRWWDLEGEFKPLHRINPLRLDYILQRSGGIFDKKVLDVGCGGGILAESMAREGAQVTGLDMGYEPLQVARLHALETGTKLDYVQETVESHAQKHPQYYDVVTCMEMLEHVPDPASVIRACAQLVKPDGHVFFSTINRNTKSWLMAVVGAEYVLKMVPKGTHDAKKFIRPSELIGWVDQTPLRERHIIGLHYNPITDHFKLGRNVDVNYMVHTQRDEA.

S-adenosyl-L-methionine contacts are provided by R44, G64, D85, and M129.

This sequence belongs to the methyltransferase superfamily. UbiG/COQ3 family.

It carries out the reaction a 3-demethylubiquinol + S-adenosyl-L-methionine = a ubiquinol + S-adenosyl-L-homocysteine + H(+). The enzyme catalyses a 3-(all-trans-polyprenyl)benzene-1,2-diol + S-adenosyl-L-methionine = a 2-methoxy-6-(all-trans-polyprenyl)phenol + S-adenosyl-L-homocysteine + H(+). The protein operates within cofactor biosynthesis; ubiquinone biosynthesis. Functionally, O-methyltransferase that catalyzes the 2 O-methylation steps in the ubiquinone biosynthetic pathway. The sequence is that of Ubiquinone biosynthesis O-methyltransferase from Yersinia enterocolitica serotype O:8 / biotype 1B (strain NCTC 13174 / 8081).